The primary structure comprises 380 residues: Cell division protein FtsZ 2 (380 aa).

GTP contacts are provided by residues Gly-47–Asn-51, Gly-134–Gly-136, Glu-165, Arg-168, and Asp-211.

Belongs to the FtsZ family. As to quaternary structure, homodimer. Polymerizes to form a dynamic ring structure in a strictly GTP-dependent manner. Interacts directly with several other division proteins.

It localises to the cytoplasm. In terms of biological role, essential cell division protein that forms a contractile ring structure (Z ring) at the future cell division site. The regulation of the ring assembly controls the timing and the location of cell division. One of the functions of the FtsZ ring is to recruit other cell division proteins to the septum to produce a new cell wall between the dividing cells. Binds GTP and shows GTPase activity. The protein is Cell division protein FtsZ 2 of Methanocaldococcus jannaschii (strain ATCC 43067 / DSM 2661 / JAL-1 / JCM 10045 / NBRC 100440) (Methanococcus jannaschii).